Reading from the N-terminus, the 180-residue chain is GTP cyclohydrolase 1 (180 aa).

Residues Cys71, His74, and Cys142 each coordinate Zn(2+).

This sequence belongs to the GTP cyclohydrolase I family. Homomer.

It catalyses the reaction GTP + H2O = 7,8-dihydroneopterin 3'-triphosphate + formate + H(+). It functions in the pathway cofactor biosynthesis; 7,8-dihydroneopterin triphosphate biosynthesis; 7,8-dihydroneopterin triphosphate from GTP: step 1/1. In Helicobacter pylori (strain P12), this protein is GTP cyclohydrolase 1.